A 283-amino-acid polypeptide reads, in one-letter code: Non-selective voltage-gated ion channel VDAC1 (283 aa).

At A2 the chain carries N-acetylalanine. K12 contacts ATP. K12 participates in a covalent cross-link: Glycyl lysine isopeptide (Lys-Gly) (interchain with G-Cter in ubiquitin). A Phosphoserine modification is found at S13. At T19 the chain carries Phosphothreonine. ATP is bound at residue K20. N6-acetyllysine; alternate is present on K20. An N6-succinyllysine; alternate modification is found at K20. Residue K20 forms a Glycyl lysine isopeptide (Lys-Gly) (interchain with G-Cter in ubiquitin); alternate linkage. A run of 2 beta stranded transmembrane segments spans residues 26–35 (LIKLDLKTKS) and 39–47 (LEFTSSGSA). Residues K53 and K61 each participate in a glycyl lysine isopeptide (Lys-Gly) (interchain with G-Cter in ubiquitin) cross-link. A beta stranded transmembrane segment spans residues 54 to 64 (VNGSLETKYRW). Y67 is subject to Phosphotyrosine. 3 beta stranded membrane-spanning segments follow: residues 69-76 (LTFTEKWN), 80-89 (TLGTEITVED), and 95-104 (LKLTFDSSFS). T107 carries the phosphothreonine modification. Position 109 is an N6-acetyllysine; alternate (K109). Residue K109 forms a Glycyl lysine isopeptide (Lys-Gly) (interchain with G-Cter in ubiquitin); alternate linkage. Residue K110 forms a Glycyl lysine isopeptide (Lys-Gly) (interchain with G-Cter in ubiquitin) linkage. Transmembrane regions (beta stranded) follow at residues 111–120 (NAKIKTGYKR), 123–130 (INLGCDVD), 137–145 (SIRGALVLG), and 150–158 (LAGYQMNFE). Residue S137 is modified to Phosphoserine. K161 participates in a covalent cross-link: Glycyl lysine isopeptide (Lys-Gly) (interchain with G-Cter in ubiquitin). The next 6 beta stranded transmembrane spans lie at 163-175 (RVTQ…GYKT), 178-185 (FQLHTNVN), 189-198 (EFGGSIYQKV), 202-211 (LETAVNLAWT), 218-227 (RFGIAAKYQV), and 231-238 (ACFSAKVN). S193 carries the post-translational modification Phosphoserine; by NEK1. Position 240 is a phosphoserine (S240). 242-244 (LIG) provides a ligand contact to NAD(+). The beta stranded transmembrane segment at 242–251 (LIGLGYTQTL) threads the bilayer. Position 252 is an N6-acetyllysine (K252). A beta stranded membrane pass occupies residues 254–263 (GIKLTLSALL). 260–264 (SALLD) contributes to the NAD(+) binding site. K266 bears the N6-acetyllysine; alternate mark. Residue K266 forms a Glycyl lysine isopeptide (Lys-Gly) (interchain with G-Cter in ubiquitin); alternate linkage. A beta stranded membrane pass occupies residues 273–282 (HKLGLGLEFQ). K274 is covalently cross-linked (Glycyl lysine isopeptide (Lys-Gly) (interchain with G-Cter in ubiquitin)).

This sequence belongs to the eukaryotic mitochondrial porin family. Homodimer and homotrimer; in response to cyclic AMP or calcium; oligomerization is required for scramblase activity. Component of the mitochondrial permeability transition pore complex (mPTPC), at least composed of SPG7, VDAC1 and PPIF. Interacts with SPG7, NIPSNAP2 and SLC25A30. Interacts with hexokinases including HK1. The HK1-VDAC1 complex interacts with ATF2. Interacts with BCL2L1. Interacts with BAK1. Interacts with RTL10/BOP (via BH3 domain). Interacts with amyloid-beta and APP; induces VDAC1 dephosphorylation. Interacts with TMEM41B. Interacts with BCAP31. Interacts with HSPA9; this interaction couples ITPR1 to VDAC1. Phosphorylation at Ser-193 by NEK1 promotes the closed conformational state preventing excessive mitochondrial membrane permeability and subsequent apoptotic cell death after injury. Phosphorylation by the AKT-GSK3B axis stabilizes the protein probably by preventing ubiquitin-mediated proteasomal degradation. In terms of processing, ubiquitinated. Undergoes monoubiquitination and polyubiquitination by PRKN; monoubiquitination at Lys-274 inhibits apoptosis, whereas polyubiquitination leads to its degradation and promotes mitophagy. Deubiquitinated by USP30. As to expression, widely expressed. High levels in heart and kidney with lower levels in brain and ascitic tumor. Very low levels in liver.

Its subcellular location is the mitochondrion outer membrane. The protein localises to the cell membrane. It is found in the membrane raft. The catalysed reaction is Ca(2+)(in) = Ca(2+)(out). It catalyses the reaction Na(+)(in) = Na(+)(out). It carries out the reaction chloride(in) = chloride(out). The enzyme catalyses Mg(2+)(in) = Mg(2+)(out). The catalysed reaction is K(+)(in) = K(+)(out). It catalyses the reaction ATP(in) = ATP(out). It carries out the reaction L-glutamate(out) = L-glutamate(in). The enzyme catalyses dopamine(out) = dopamine(in). The catalysed reaction is acetylcholine(in) = acetylcholine(out). It catalyses the reaction Fe(III)-[cytochrome c](out) = Fe(III)-[cytochrome c](in). It carries out the reaction a 1,2-diacyl-sn-glycero-3-phosphocholine(in) = a 1,2-diacyl-sn-glycero-3-phosphocholine(out). The enzyme catalyses a 1,2-diacyl-sn-glycero-3-phospho-L-serine(in) = a 1,2-diacyl-sn-glycero-3-phospho-L-serine(out). With respect to regulation, inhibited by nitric oxide. Voltage-gated ion channel activity is inhibited by lanthanum(3+) and ruthenium red. Mitochondrial calcium transport is inhibited by lanthanum(3+), ruthenium red and Ru360. In terms of biological role, non-selective voltage-gated ion channel that mediates the transport of anions and cations through the mitochondrion outer membrane and plasma membrane. The channel at the outer mitochondrial membrane allows diffusion of small hydrophilic molecules; in the plasma membrane it is involved in cell volume regulation and apoptosis. It adopts an open conformation at low or zero membrane potential and a closed conformation at potentials above 30-40 mV. The open state has a weak anion selectivity whereas the closed state is cation-selective. Binds various signaling molecules, including the sphingolipid ceramide, the phospholipid phosphatidylcholine, and the sterols cholesterol and oxysterol. In depolarized mitochondria, acts downstream of PRKN and PINK1 to promote mitophagy or prevent apoptosis; polyubiquitination by PRKN promotes mitophagy, while monoubiquitination by PRKN decreases mitochondrial calcium influx which ultimately inhibits apoptosis. May participate in the formation of the permeability transition pore complex (PTPC) responsible for the release of mitochondrial products that triggers apoptosis. May mediate ATP export from cells. Part of a complex composed of HSPA9, ITPR1 and VDAC1 that regulates mitochondrial calcium-dependent apoptosis by facilitating calcium transport from the ER lumen to the mitochondria intermembrane space thus providing calcium for the downstream calcium channel MCU that directly releases it into mitochondria matrix. Functionally, catalyzes the scrambling of phospholipids across the outer mitochondrial membrane; the mechanism is unrelated to channel activity and is capable of translocating both anionic and zwitterionic phospholipids. The protein is Non-selective voltage-gated ion channel VDAC1 of Rattus norvegicus (Rat).